The primary structure comprises 465 residues: 28S rRNA (cytosine-C(5))-methyltransferase (465 aa).

An N-acetylglycine modification is found at glycine 2. Serine 167 bears the Phosphoserine mark. S-adenosyl-L-methionine-binding positions include 234-240 (CAAPGNK), aspartate 258, arginine 263, and aspartate 305. The Nucleophile role is filled by cysteine 359. A disordered region spans residues 430-465 (TPAPQTDAMDPEPLSQVPKRKRRRKAAVGASMQPST).

The protein belongs to the class I-like SAM-binding methyltransferase superfamily. RsmB/NOP family. In terms of tissue distribution, in the hippocampus, specifically expressed in adult hippocampal NG2-positive oligodendrocyte precursor cells (at protein level).

Its subcellular location is the nucleus. It is found in the nucleolus. It carries out the reaction a cytidine in 28S rRNA + S-adenosyl-L-methionine = a 5-methylcytidine in 28S rRNA + S-adenosyl-L-homocysteine + H(+). S-adenosyl-L-methionine-dependent methyltransferase that specifically methylates the C(5) position of cytosine 3438 (m5C3438) in 28S rRNA. m5C3782 promotes protein translation without affecting ribosome biogenesis and fidelity. Required for corpus callosum and cerebral cortex development. In Mus musculus (Mouse), this protein is 28S rRNA (cytosine-C(5))-methyltransferase.